We begin with the raw amino-acid sequence, 89 residues long: Large ribosomal subunit protein bL27 (89 aa).

A disordered region spans residues 1 to 21; sequence MAHKKAGGSSRNGRDSQSKRL.

It belongs to the bacterial ribosomal protein bL27 family.

This is Large ribosomal subunit protein bL27 from Rhizobium leguminosarum bv. trifolii (strain WSM2304).